The sequence spans 97 residues: Eotaxin (97 aa).

A signal peptide spans 1–23; the sequence is MQLSTALLFLLLTATSFTSQVLA. 2 disulfide bridges follow: C32–C57 and C33–C73. T94 is a glycosylation site (O-linked (GalNAc...) threonine).

The protein belongs to the intercrine beta (chemokine CC) family.

The protein resides in the secreted. In response to the presence of allergens, this protein directly promotes the accumulation of eosinophils (a prominent feature of allergic inflammatory reactions), but not lymphocytes, macrophages or neutrophils. Binds to CCR3. The sequence is that of Eotaxin (Ccl11) from Rattus norvegicus (Rat).